The primary structure comprises 171 residues: Ly6/PLAUR domain-containing protein 6 (171 aa).

A signal peptide spans 1-25 (MEPSPALAWLLLLSLVADCLKAAQS). The region spanning 47 to 141 (FKCFTCEKAA…PRNETDATFA (95 aa)) is the UPAR/Ly6 domain. Intrachain disulfides connect C49/C77, C52/C61, C70/C96, C102/C121, C107/C118, and C122/C127. Residues 88 to 90 (NSI) carry the NxI motif motif. Residues N134 and N147 are each glycosylated (N-linked (GlcNAc...) asparagine). N147 carries GPI-anchor amidated asparagine lipidation. Residues 148 to 171 (QTNGHPHCVSVIVSCLWVWLGLTL) constitute a propeptide, removed in mature form.

As to quaternary structure, interacts with nicotinic acetylcholine receptors (nAChRs) including CHRNA3, CHRNA4, CHRNA5, CHRNA6, CHRNA7, CHRNB2 and CHRNB4. Interacts (via NxI motif) with LRP6. As to expression, detected in the frontal cortex and hippocampus (at protein level). Highly expressed in the brain and spinal cord, as well as dorsal root and trigeminal ganglia.

It localises to the secreted. Its subcellular location is the cytoplasm. The protein resides in the cell membrane. The protein localises to the synapse. It is found in the synaptosome. It localises to the membrane raft. Its subcellular location is the cell projection. The protein resides in the dendrite. The protein localises to the perikaryon. Its function is as follows. Acts as a modulator of nicotinic acetylcholine receptors (nAChRs) function in the brain. Inhibits nicotine-induced Ca(2+) influx through nAChRs. In vitro, specifically inhibits alpha-3:beta-4 and alpha-7 nAChR currents in an allosteric manner. Acts as a positive regulator of Wnt/beta-catenin signaling. The polypeptide is Ly6/PLAUR domain-containing protein 6 (Lypd6) (Mus musculus (Mouse)).